Consider the following 63-residue polypeptide: Small, acid-soluble spore protein H 2 (63 aa).

It belongs to the SspH family.

The protein resides in the spore core. The polypeptide is Small, acid-soluble spore protein H 2 (Clostridium botulinum (strain ATCC 19397 / Type A)).